The sequence spans 274 residues: uncharacterized protein (274 aa).

This is an uncharacterized protein from Treponema pallidum (strain Nichols).